Consider the following 314-residue polypeptide: UDP-N-acetylenolpyruvoylglucosamine reductase (314 aa).

Residues 25–191 (KIGGPADLFA…VRVGMELRWG (167 aa)) enclose the FAD-binding PCMH-type domain. The active site involves R170. S220 (proton donor) is an active-site residue. E291 is an active-site residue.

This sequence belongs to the MurB family. It depends on FAD as a cofactor.

Its subcellular location is the cytoplasm. It catalyses the reaction UDP-N-acetyl-alpha-D-muramate + NADP(+) = UDP-N-acetyl-3-O-(1-carboxyvinyl)-alpha-D-glucosamine + NADPH + H(+). The protein operates within cell wall biogenesis; peptidoglycan biosynthesis. In terms of biological role, cell wall formation. This is UDP-N-acetylenolpyruvoylglucosamine reductase from Heliobacterium modesticaldum (strain ATCC 51547 / Ice1).